The sequence spans 249 residues: DNA repair protein RecO (249 aa).

This sequence belongs to the RecO family.

Involved in DNA repair and RecF pathway recombination. This is DNA repair protein RecO from Solidesulfovibrio magneticus (strain ATCC 700980 / DSM 13731 / RS-1) (Desulfovibrio magneticus).